A 232-amino-acid polypeptide reads, in one-letter code: Large ribosomal subunit protein uL1 (232 aa).

Belongs to the universal ribosomal protein uL1 family. Part of the 50S ribosomal subunit.

In terms of biological role, binds directly to 23S rRNA. The L1 stalk is quite mobile in the ribosome, and is involved in E site tRNA release. Protein L1 is also a translational repressor protein, it controls the translation of the L11 operon by binding to its mRNA. The sequence is that of Large ribosomal subunit protein uL1 from Syntrophus aciditrophicus (strain SB).